Reading from the N-terminus, the 728-residue chain is Propionyl-CoA carboxylase alpha chain, mitochondrial (728 aa).

The transit peptide at 1–52 (MAGFWVGTAPLVAAGRRGRWPPQQLMLSAALRTLKHVLYYSRQCLMVSRNLG) directs the protein to the mitochondrion. The region spanning 62–509 (TFDKILVANR…STKFLSDVYP (448 aa)) is the Biotin carboxylation domain. N6-acetyllysine; alternate is present on Lys65. Lys65 carries the post-translational modification N6-succinyllysine; alternate. Lys119 is modified (N6-succinyllysine). An N6-acetyllysine; alternate modification is found at Lys150. The residue at position 150 (Lys150) is an N6-succinyllysine; alternate. Lys177 contributes to the ATP binding site. Residues 181–378 (KLLAKKAEVN…LVQEMIRVAK (198 aa)) form the ATP-grasp domain. Lys200 carries the N6-acetyllysine; alternate modification. N6-succinyllysine; alternate is present on Lys200. ATP is bound by residues 209–270 (AREI…PRHI), Glu261, and Asn296. Ser252 is subject to Phosphoserine. Lys262 is subject to N6-succinyllysine. Lys328 is subject to N6-acetyllysine; alternate. Lys328 carries the N6-succinyllysine; alternate modification. Glu336, Glu349, and Asn351 together coordinate Mg(2+). 3 residues coordinate Mn(2+): Glu336, Glu349, and Asn351. The active site involves Glu349. Residues Lys385 and Lys407 each carry the N6-succinyllysine modification. Phe409 contacts biotin. Residue Lys496 is modified to N6-acetyllysine. Lys502, Lys513, and Lys648 each carry N6-succinyllysine. In terms of domain architecture, Biotinyl-binding spans 653–728 (KVTEDTSSVL…GEGDLLVELE (76 aa)). Residue Lys694 is modified to N6-biotinyllysine; by HLCS.

In terms of assembly, the holoenzyme is a dodecamer composed of 6 PCCA/alpha subunits and 6 PCCB/beta subunits. Interacts (via the biotin carboxylation domain) with SIRT4. Interacts with SIRT3 and SIRT5. Requires Mg(2+) as cofactor. The cofactor is Mn(2+). Biotin is required as a cofactor. Acetylated. Post-translationally, the biotin cofactor is covalently attached to the C-terminal biotinyl-binding domain and is required for the catalytic activity. Biotinylation is catalyzed by HLCS.

Its subcellular location is the mitochondrion matrix. The catalysed reaction is propanoyl-CoA + hydrogencarbonate + ATP = (S)-methylmalonyl-CoA + ADP + phosphate + H(+). It carries out the reaction butanoyl-CoA + hydrogencarbonate + ATP = (2S)-ethylmalonyl-CoA + ADP + phosphate + H(+). It participates in metabolic intermediate metabolism; propanoyl-CoA degradation; succinyl-CoA from propanoyl-CoA: step 1/3. Functionally, this is one of the 2 subunits of the biotin-dependent propionyl-CoA carboxylase (PCC), a mitochondrial enzyme involved in the catabolism of odd chain fatty acids, branched-chain amino acids isoleucine, threonine, methionine, and valine and other metabolites. Propionyl-CoA carboxylase catalyzes the carboxylation of propionyl-CoA/propanoyl-CoA to D-methylmalonyl-CoA/(S)-methylmalonyl-CoA. Within the holoenzyme, the alpha subunit catalyzes the ATP-dependent carboxylation of the biotin carried by the biotin carboxyl carrier (BCC) domain, while the beta subunit then transfers the carboxyl group from carboxylated biotin to propionyl-CoA. Propionyl-CoA carboxylase also significantly acts on butyryl-CoA/butanoyl-CoA, which is converted to ethylmalonyl-CoA/(2S)-ethylmalonyl-CoA at a much lower rate. Other alternative minor substrates include (2E)-butenoyl-CoA/crotonoyl-CoA. The polypeptide is Propionyl-CoA carboxylase alpha chain, mitochondrial (Homo sapiens (Human)).